A 438-amino-acid polypeptide reads, in one-letter code: UDP-N-acetylmuramoylalanine--D-glutamate ligase (438 aa).

Residue 112–118 (GSNGKST) participates in ATP binding.

The protein belongs to the MurCDEF family.

It is found in the cytoplasm. The catalysed reaction is UDP-N-acetyl-alpha-D-muramoyl-L-alanine + D-glutamate + ATP = UDP-N-acetyl-alpha-D-muramoyl-L-alanyl-D-glutamate + ADP + phosphate + H(+). The protein operates within cell wall biogenesis; peptidoglycan biosynthesis. In terms of biological role, cell wall formation. Catalyzes the addition of glutamate to the nucleotide precursor UDP-N-acetylmuramoyl-L-alanine (UMA). This is UDP-N-acetylmuramoylalanine--D-glutamate ligase from Pectobacterium atrosepticum (strain SCRI 1043 / ATCC BAA-672) (Erwinia carotovora subsp. atroseptica).